The sequence spans 510 residues: Glycerol kinase (510 aa).

Thr-13 contacts ADP. Thr-13 and Thr-14 together coordinate ATP. Thr-13 serves as a coordination point for sn-glycerol 3-phosphate. Arg-17 contacts ADP. Sn-glycerol 3-phosphate is bound by residues Arg-83, Glu-84, Tyr-135, and Asp-255. Residues Arg-83, Glu-84, Tyr-135, Asp-255, and Gln-256 each contribute to the glycerol site. ADP-binding residues include Thr-277, Gly-321, Gly-421, and Asn-425. ATP is bound by residues Thr-277, Gly-321, and Gly-421.

This sequence belongs to the FGGY kinase family.

It catalyses the reaction glycerol + ATP = sn-glycerol 3-phosphate + ADP + H(+). It participates in polyol metabolism; glycerol degradation via glycerol kinase pathway; sn-glycerol 3-phosphate from glycerol: step 1/1. In terms of biological role, key enzyme in the regulation of glycerol uptake and metabolism. Catalyzes the phosphorylation of glycerol to yield sn-glycerol 3-phosphate. In Haloquadratum walsbyi (strain DSM 16790 / HBSQ001), this protein is Glycerol kinase.